A 329-amino-acid chain; its full sequence is Glycerol-3-phosphate dehydrogenase [NAD(P)+] (329 aa).

Ser13, Trp14, His34, and Lys105 together coordinate NADPH. Sn-glycerol 3-phosphate contacts are provided by Lys105, Gly134, and Ser136. Ala138 contacts NADPH. Lys189, Asp242, Ser252, Arg253, and Asn254 together coordinate sn-glycerol 3-phosphate. The active-site Proton acceptor is the Lys189. Position 253 (Arg253) interacts with NADPH. The NADPH site is built by Val277 and Glu279.

It belongs to the NAD-dependent glycerol-3-phosphate dehydrogenase family.

The protein resides in the cytoplasm. The catalysed reaction is sn-glycerol 3-phosphate + NAD(+) = dihydroxyacetone phosphate + NADH + H(+). The enzyme catalyses sn-glycerol 3-phosphate + NADP(+) = dihydroxyacetone phosphate + NADPH + H(+). It functions in the pathway membrane lipid metabolism; glycerophospholipid metabolism. In terms of biological role, catalyzes the reduction of the glycolytic intermediate dihydroxyacetone phosphate (DHAP) to sn-glycerol 3-phosphate (G3P), the key precursor for phospholipid synthesis. The protein is Glycerol-3-phosphate dehydrogenase [NAD(P)+] of Legionella pneumophila (strain Lens).